The sequence spans 1486 residues: Chromosome partition protein MukB (1486 aa).

34–41 (GGNGAGKS) serves as a coordination point for ATP. Coiled-coil stretches lie at residues 326 to 418 (LEAD…QYNQ), 444 to 480 (LETFQAKELEATEKMLSLEQKMSMAQTAHSQFEQAYQ), and 509 to 603 (RHLA…RAPV). The flexible hinge stretch occupies residues 666–783 (PGGSEDQRLN…EVPLFGRAAR (118 aa)). 3 coiled-coil regions span residues 835–923 (EAEI…AKLE), 977–1115 (EMLS…TAKA), and 1209–1266 (VEAI…QNVS).

It belongs to the SMC family. MukB subfamily. As to quaternary structure, homodimerization via its hinge domain. Binds to DNA via its C-terminal region. Interacts, and probably forms a ternary complex, with MukE and MukF via its C-terminal region. The complex formation is stimulated by calcium or magnesium. Interacts with tubulin-related protein FtsZ.

The protein localises to the cytoplasm. It is found in the nucleoid. Functionally, plays a central role in chromosome condensation, segregation and cell cycle progression. Functions as a homodimer, which is essential for chromosome partition. Involved in negative DNA supercoiling in vivo, and by this means organize and compact chromosomes. May achieve or facilitate chromosome segregation by condensation DNA from both sides of a centrally located replisome during cell division. This chain is Chromosome partition protein MukB, found in Escherichia coli (strain SMS-3-5 / SECEC).